Consider the following 271-residue polypeptide: Orotidine 5'-phosphate decarboxylase (271 aa).

The Proton donor role is filled by K95.

The protein belongs to the OMP decarboxylase family. Type 2 subfamily.

The catalysed reaction is orotidine 5'-phosphate + H(+) = UMP + CO2. It participates in pyrimidine metabolism; UMP biosynthesis via de novo pathway; UMP from orotate: step 2/2. In Aromatoleum aromaticum (strain DSM 19018 / LMG 30748 / EbN1) (Azoarcus sp. (strain EbN1)), this protein is Orotidine 5'-phosphate decarboxylase.